Here is a 273-residue protein sequence, read N- to C-terminus: Protein INAPERTURATE POLLEN1 (273 aa).

The 256-residue stretch at 12-267 folds into the DOG1 domain; it reads SRRFNDFYED…KDQILLQDFE (256 aa).

In terms of tissue distribution, expressed only in anthers and in pollen. Not detected in other flower tissues, stems, leaves and siliques.

It localises to the cytoplasm. Functionally, required for the formation of pollen surface apertures, which arise by restriction of exine deposition at specific sites. The aperture length depends on the INP1 dosage. Does not play a role in specifying the number or position of apertures. Acts in a sporophytic manner. The chain is Protein INAPERTURATE POLLEN1 from Arabidopsis thaliana (Mouse-ear cress).